The following is a 285-amino-acid chain: Tryptophan synthase alpha chain (285 aa).

Active-site proton acceptor residues include E53 and D64.

Belongs to the TrpA family. In terms of assembly, tetramer of two alpha and two beta chains.

The catalysed reaction is (1S,2R)-1-C-(indol-3-yl)glycerol 3-phosphate + L-serine = D-glyceraldehyde 3-phosphate + L-tryptophan + H2O. It functions in the pathway amino-acid biosynthesis; L-tryptophan biosynthesis; L-tryptophan from chorismate: step 5/5. Functionally, the alpha subunit is responsible for the aldol cleavage of indoleglycerol phosphate to indole and glyceraldehyde 3-phosphate. In Bordetella bronchiseptica (strain ATCC BAA-588 / NCTC 13252 / RB50) (Alcaligenes bronchisepticus), this protein is Tryptophan synthase alpha chain.